We begin with the raw amino-acid sequence, 519 residues long: MSDLFEDPAPSRNTPEFTVSELSGAVKRVIEGEFGLVRVRGEIGRVSRPASGHLYFDLKDDRAVMAAICWKGQAGRLSVRPEEGMEVVATGRMTTFPGQSKYQIIVEDMAPAGAGALMAMLEKRRAALAAEGLFDAARKRPLPYLPRVIGVVTSPSGAVIRDILHRLRDRFPSHVLIWPVAVQGEKCAPEVAAAIRGFNALPEGGPIPRPDLLIVARGGGSLEDLWGFNEEIVVRAAAESRIPLISAVGHETDTTLIDHAADRRAPTPTAAAEMAVPVRLELLAGLDGQGARLSRCAAETIRRRDQRLRDLARALPRLESLVAGPSQRFDLWSGRLSGALGQSVAARRARLEPLGAHLRPRLLADLVARQKDRLGDRTRSLETCLGRRAERARDRFEALSARLAPAFARLIAETERATRRDAATLGTLAARLDAAPEARLARLSDRLEALDRLRQTLGYRETLKRGYAVVRADGAVVTTKAEAGTAAVLEIEFQDGRLSVGRGKTRKPKEEPPAQGSLL.

The disordered stretch occupies residues 500 to 519; that stretch reads VGRGKTRKPKEEPPAQGSLL.

Belongs to the XseA family. Heterooligomer composed of large and small subunits.

Its subcellular location is the cytoplasm. The catalysed reaction is Exonucleolytic cleavage in either 5'- to 3'- or 3'- to 5'-direction to yield nucleoside 5'-phosphates.. In terms of biological role, bidirectionally degrades single-stranded DNA into large acid-insoluble oligonucleotides, which are then degraded further into small acid-soluble oligonucleotides. This Cereibacter sphaeroides (strain KD131 / KCTC 12085) (Rhodobacter sphaeroides) protein is Exodeoxyribonuclease 7 large subunit.